The following is a 1010-amino-acid chain: Sodium/potassium-transporting ATPase subunit alpha-3 (1010 aa).

A disordered region spans residues 1–21; it reads MGDKDDRFPKKKKGGTKDMDA. Over 1-74 the chain is Cytoplasmic; sequence MGDKDDRFPK…NALTPPPTTP (74 aa). An interaction with phosphoinositide-3 kinase region spans residues 69 to 71; sequence PPP. A helical membrane pass occupies residues 75–95; that stretch reads EWVKFCRQLFGGFSILLWTGA. Residues 96 to 118 are Extracellular-facing; that stretch reads ILCFLAYAIQAATEDEPAGDNLY. A helical membrane pass occupies residues 119 to 139; it reads LGIVLTAVVVITGCFSYFQEA. Topologically, residues 140–275 are cytoplasmic; sequence KSSKIMESFK…TGKTPIAVEI (136 aa). Polar residues predominate over residues 201–216; sequence DNSSLTGESEPQSRSP. Residues 201–221 are disordered; it reads DNSSLTGESEPQSRSPDCTHD. Residues 276 to 295 traverse the membrane as a helical segment; sequence EHFIHIITGVAVFLGVTFFI. Topologically, residues 296–307 are extracellular; sequence LAIILGYTWLKA. A helical membrane pass occupies residues 308-325; it reads VIFLIGIIVANVPEGLLA. The Cytoplasmic portion of the chain corresponds to 326 to 759; that stretch reads TVTVCLTLTA…EEGRLIFDNL (434 aa). Catalysis depends on Asp-363, which acts as the 4-aspartylphosphate intermediate. 2 residues coordinate Mg(2+): Asp-704 and Asp-708. The helical transmembrane segment at 760–779 threads the bilayer; the sequence is KKSIAYTLTSNIPEITPFLF. Residues 780–789 are Extracellular-facing; sequence FIIVNIPLAL. The helical transmembrane segment at 790–810 threads the bilayer; that stretch reads GTITILCIDLGTDMGSAISLA. The Cytoplasmic portion of the chain corresponds to 811 to 830; the sequence is YETAESDIMKRQPRNPCRDK. Residues 831-853 traverse the membrane as a helical segment; the sequence is LVNERLISIAYGQIGMIQALGGF. Residues 854-905 lie on the Extracellular side of the membrane; the sequence is FSYFVILAENGFLPSQLVGIRLNWDDRSLNDLEDSYGQQWTYEQRKIVEFTC. A helical membrane pass occupies residues 906–925; the sequence is HTAFFVSIVVVQWADLIICK. Residues 926 to 938 lie on the Cytoplasmic side of the membrane; the sequence is TRRNSVFQQGMKN. Ser-930 is subject to Phosphoserine; by PKA. A helical membrane pass occupies residues 939–957; sequence KILIFGLFEETALAAFLSY. The Extracellular portion of the chain corresponds to 958 to 972; the sequence is CPGMDVALRMYPLKP. The chain crosses the membrane as a helical span at residues 973-993; that stretch reads TWWFWAFPYSFLIFVYDEARK. Over 994-1010 the chain is Cytoplasmic; the sequence is LILCRNPGGWVEKETYY.

Belongs to the cation transport ATPase (P-type) (TC 3.A.3) family. Type IIC subfamily. As to quaternary structure, the sodium/potassium-transporting ATPase is composed of a catalytic alpha subunit, an auxiliary non-catalytic beta subunit and an additional regulatory subunit.

It localises to the cell membrane. The catalysed reaction is K(+)(out) + Na(+)(in) + ATP + H2O = K(+)(in) + Na(+)(out) + ADP + phosphate + H(+). Its function is as follows. This is the catalytic component of the active enzyme, which catalyzes the hydrolysis of ATP coupled with the exchange of sodium and potassium ions across the plasma membrane. This action creates the electrochemical gradient of sodium and potassium ions, providing the energy for active transport of various nutrients. This chain is Sodium/potassium-transporting ATPase subunit alpha-3 (atp1a3), found in Oreochromis mossambicus (Mozambique tilapia).